The primary structure comprises 879 residues: MDQFKGEPRLPKFAVPKRYDLRLNPDLIACTFTGTVAIDLDIVADTRFIVLNAADLSVNDASVSFTPPSSSKALAAPKVVLFEEDEILVLEFGEILPHGVGVLKLGFNGVLNDKMKGFYRSTYEHNGEKKNMAVTQFEPADARRCFPCWDEPACKATFKITLEVPTDLVALSNMPIMEEKVNGNLKIVSYQESPIMSTYLVAIVVGLFDYVEDHTSDGIKVRVYCQVGKADQGKFALHVGAKTLDLFKEYFAVPYPLPKMDMIAIPDFAAGAMENYGLVTYRETALLYDEQHSAASNKQRVATVVAHELAHQWFGNLVTMEWWTHLWLNEGFATWVSYLATDSLFPEWKIWTQFLDESTEGLRLDGLEESHPIEVEVNHAAEIDEIFDAISYRKGASVIRMLQSYLGAEVFQKSLAAYIKNHAYSNAKTEDLWAALEAGSGEPVNKLMSSWTKQKGYPVVSAKIKDGKLELEQSRFLSSGSPGEGQWIVPVTLCCGSYEKRKNFLLESKSGAYDLKELLGCSIADGSDKINGTCSWIKINVDQAGFYRVKYDDSLAAGLRNATESQSLTSIDRYGILDDSFALTMARQQSLASLLTLCSAYKKELDYTVLSNLIAISYKVVKIGADANQELMSGIKHFFIGVFQFAAGKLGWDPKQGESHLDAMLRGEVLTALAVFGHDETLKEAVRRFDAFLADRNTPLLPPDIRRAAYVAVMQRANKSDKSGYESLLRVYRETDLSQEKTRILGSLASCPDPTIVQDVLNFVLSDEVRNQDALYGLSGVSWEGREVAWKWLQEKWEYIGNTWGSGFLITRFISAVVSPFASFEKAKEVEEFFATRSKPSMARTLKQSIERVHINANWVESIKKEDNLTQLVAQLSSN.

The segment at 98–205 is required for membrane association; it reads HGVGVLKLGF…MSTYLVAIVV (108 aa). Substrate contacts are provided by residues Glu-138 and 271–275; that span reads GAMEN. His-307 is a binding site for Zn(2+). The active-site Proton acceptor is the Glu-308. Residues His-311 and Glu-330 each coordinate Zn(2+). Residues 728–729 carry the Dileucine internalization motif motif; sequence LL.

It belongs to the peptidase M1 family. Homodimer. Interacts with N-1-naphthylphthalamic acid (NPA). The cofactor is Zn(2+). Ubiquitous with preferential expression in 5 days-old seedlings, roots, young flowers, upper inflorescence stems, and rosette leaves.

It localises to the membrane. It is found in the microsome membrane. The protein localises to the cytoplasm. It carries out the reaction Release of an N-terminal amino acid, Xaa-|-Yaa- from a peptide, amide or arylamide. Xaa is preferably Ala, but may be most amino acids including Pro (slow action). When a terminal hydrophobic residue is followed by a prolyl residue, the two may be released as an intact Xaa-Pro dipeptide.. Its function is as follows. Metallopeptidase that binds to the auxin transport inhibitor N-1-naphthylphthalamic acid (NPA). Required for embryonic and seedling development as well as cell cycle progression. Homodimerization is required to proper localization and activity. May play a negative role in the regulation of PIN auxin transport proteins. The polypeptide is Aminopeptidase M1 (APM1) (Arabidopsis thaliana (Mouse-ear cress)).